A 93-amino-acid polypeptide reads, in one-letter code: Putative hemolysin E-like protein (93 aa).

It belongs to the hemolysin E family.

This chain is Putative hemolysin E-like protein, found in Escherichia coli O6:H1 (strain CFT073 / ATCC 700928 / UPEC).